A 962-amino-acid chain; its full sequence is Exportin-T (962 aa).

At methionine 1 the chain carries N-acetylmethionine. The interval 1–385 (MDEQALLGLN…MLAVMKKLTY (385 aa)) is necessary for interaction with Ran, nuclear localization and nuclear import. The necessary for tRNA-binding, cytoplasmic localization and nuclear export stretch occupies residues 443-962 (FMEVEVAIRL…LKVFFQRAKP (520 aa)). The residue at position 634 (lysine 634) is an N6-acetyllysine.

Belongs to the exportin family. In terms of assembly, found in a complex with XPOT, Ran and tRNA. Probably found in a complex with nucleoporins. Interacts with Ran and tRNA in a GTP-dependent manner.

It localises to the nucleus. It is found in the cytoplasm. Mediates the nuclear export of aminoacylated tRNAs. In the nucleus binds to tRNA and to the GTPase Ran in its active GTP-bound form. Docking of this trimeric complex to the nuclear pore complex (NPC) is mediated through binding to nucleoporins. Upon transit of a nuclear export complex into the cytoplasm, disassembling of the complex and hydrolysis of Ran-GTP to Ran-GDP (induced by RANBP1 and RANGAP1, respectively) cause release of the tRNA from the export receptor. XPOT then return to the nuclear compartment and mediate another round of transport. The directionality of nuclear export is thought to be conferred by an asymmetric distribution of the GTP- and GDP-bound forms of Ran between the cytoplasm and nucleus. The chain is Exportin-T (XPOT) from Homo sapiens (Human).